Here is a 365-residue protein sequence, read N- to C-terminus: Protein Wnt-6 (365 aa).

The N-terminal stretch at 1 to 24 (MLPPLPSRLGLLLLLLLCPAHVGG) is a signal peptide. 11 disulfides stabilise this stretch: Cys76–Cys87, Cys124–Cys132, Cys134–Cys172, Cys222–Cys236, Cys224–Cys231, Cys294–Cys325, Cys310–Cys320, Cys324–Cys364, Cys340–Cys355, Cys342–Cys352, and Cys347–Cys348. The N-linked (GlcNAc...) asparagine glycan is linked to Asn86. Over residues 140 to 158 (RAPPRPSGLPGTPGPPGPA) the composition is skewed to pro residues. The disordered stretch occupies residues 140 to 164 (RAPPRPSGLPGTPGPPGPAGSPEGS). Ser228 is lipidated: O-palmitoleoyl serine; by PORCN. Residue Asn311 is glycosylated (N-linked (GlcNAc...) asparagine).

Belongs to the Wnt family. Interacts with PORCN. In terms of processing, palmitoleoylation is required for efficient binding to frizzled receptors. Depalmitoleoylation leads to Wnt signaling pathway inhibition. In terms of tissue distribution, expressed in gastric cancer cell lines and gastric cancer tissues (at protein level). Detected in the apical gland region of the gastric foveolar epithelium (at protein level).

The protein resides in the secreted. It is found in the extracellular space. Its subcellular location is the extracellular matrix. In terms of biological role, ligand for members of the frizzled family of seven transmembrane receptors. Probable developmental protein. May be a signaling molecule which affects the development of discrete regions of tissues. Is likely to signal over only few cell diameters. Together with CAV1 may promote chemoresistance of gastric cancer cells to DNA-damaging anthracycline drugs through the activation of the canonical Wnt receptor signaling pathway. This Homo sapiens (Human) protein is Protein Wnt-6 (WNT6).